The following is an 82-amino-acid chain: Small ribosomal subunit protein bS16 (82 aa).

The protein belongs to the bacterial ribosomal protein bS16 family.

In Deinococcus deserti (strain DSM 17065 / CIP 109153 / LMG 22923 / VCD115), this protein is Small ribosomal subunit protein bS16.